Reading from the N-terminus, the 243-residue chain is Uridylate kinase (243 aa).

18–21 (KLGG) is a binding site for ATP. UMP is bound at residue G59. G60 and R64 together coordinate ATP. Residues D79 and 140–147 (MGMPYFST) contribute to the UMP site. Residues Y173 and D176 each contribute to the ATP site.

It belongs to the UMP kinase family. Homohexamer.

Its subcellular location is the cytoplasm. It catalyses the reaction UMP + ATP = UDP + ADP. The protein operates within pyrimidine metabolism; CTP biosynthesis via de novo pathway; UDP from UMP (UMPK route): step 1/1. With respect to regulation, inhibited by UTP. In terms of biological role, catalyzes the reversible phosphorylation of UMP to UDP. This Corynebacterium glutamicum (strain R) protein is Uridylate kinase.